Here is a 236-residue protein sequence, read N- to C-terminus: LexA repressor (236 aa).

A DNA-binding region (H-T-H motif) is located at residues 26-46 (FDEMKDALDLRSKSGIHRLII). Residues S157 and K195 each act as for autocatalytic cleavage activity in the active site.

The protein belongs to the peptidase S24 family. In terms of assembly, homodimer.

It carries out the reaction Hydrolysis of Ala-|-Gly bond in repressor LexA.. Represses a number of genes involved in the response to DNA damage (SOS response), including recA and lexA. In the presence of single-stranded DNA, RecA interacts with LexA causing an autocatalytic cleavage which disrupts the DNA-binding part of LexA, leading to derepression of the SOS regulon and eventually DNA repair. This is LexA repressor from Methylocella silvestris (strain DSM 15510 / CIP 108128 / LMG 27833 / NCIMB 13906 / BL2).